Reading from the N-terminus, the 167-residue chain is NADH-quinone oxidoreductase subunit B 2 (167 aa).

[4Fe-4S] cluster-binding residues include C38, C39, C104, and C133.

This sequence belongs to the complex I 20 kDa subunit family. NDH-1 is composed of 14 different subunits. Subunits NuoB, C, D, E, F, and G constitute the peripheral sector of the complex. [4Fe-4S] cluster serves as cofactor.

Its subcellular location is the cell membrane. It carries out the reaction a quinone + NADH + 5 H(+)(in) = a quinol + NAD(+) + 4 H(+)(out). Its function is as follows. NDH-1 shuttles electrons from NADH, via FMN and iron-sulfur (Fe-S) centers, to quinones in the respiratory chain. The immediate electron acceptor for the enzyme in this species is believed to be ubiquinone. Couples the redox reaction to proton translocation (for every two electrons transferred, four hydrogen ions are translocated across the cytoplasmic membrane), and thus conserves the redox energy in a proton gradient. The sequence is that of NADH-quinone oxidoreductase subunit B 2 from Roseiflexus sp. (strain RS-1).